An 864-amino-acid chain; its full sequence is Leucine--tRNA ligase (864 aa).

The 'HIGH' region signature appears at 42 to 52 (PYPSGKLHMGH). The 'KMSKS' region signature appears at 624–628 (KMSKS). K627 is an ATP binding site.

It belongs to the class-I aminoacyl-tRNA synthetase family.

It localises to the cytoplasm. The enzyme catalyses tRNA(Leu) + L-leucine + ATP = L-leucyl-tRNA(Leu) + AMP + diphosphate. In Burkholderia multivorans (strain ATCC 17616 / 249), this protein is Leucine--tRNA ligase.